The sequence spans 1338 residues: Thioester-containing protein 1 allele R1 (1338 aa).

The N-terminal stretch at Met1–Gly21 is a signal peptide. Asn68, Asn199, Asn242, Asn312, and Asn481 each carry an N-linked (GlcNAc...) asparagine glycan. The interval Glu580–Gly609 is may contain the cleavage site. N-linked (GlcNAc...) asparagine glycosylation is found at Asn637, Asn728, and Asn813. Residues Cys859–Gln862 constitute a cross-link (isoglutamyl cysteine thioester (Cys-Gln)). N-linked (GlcNAc...) asparagine glycosylation is found at Asn919 and Asn1065. Cystine bridges form between Cys1217-Cys1283, Cys1326-Cys1338, and Cys1329-Cys1334.

Heterodimer of a TEP1-N chain and an TEP1-C chain non-covalently linked. Forms a complex composed of TEP1-N and TEP1-C heterodimer, LRIM1 and APL1C; the interaction stabilizes TEP1-N and TEP1-C heterodimer, prevents its binding to tissues while circulating in the hemolymph and protects the thioester bond from hydrolysis. Mature TEP1 and to a lesser extent full-length TEP1 interact with SPCLIP1; the interaction is induced by microbial infection. In terms of processing, in the hemolymph, the full-length protein is cleaved by an unknow protease into a 75kDa N-terminal (TEP1-N) chain and an 80kDa C-terminal (TEP1-C) chain which remain non-covalently linked. The TEP1-C chain contains the thioester bond which covalently binds to the pathogen surface. Cleavage is induced by bacterial infection or aseptic wound injury. During embryonic and pupal development, the cleaved form is the predominant form. Post-translationally, N-glycosylated.

The protein localises to the secreted. In terms of biological role, plays an essential role in the innate immune response against bacteria, fungi and protozoa infection. After proteolytic cleavage, the protein C-terminus binds covalently through a thioester bond to the pathogen surface resulting in pathogen clearance either by melanization or lysis. Initiate the recruitment and activation of a cascade of proteases, mostly of CLIP-domain serine proteases, which leads to the proteolytic cleavage of the prophenoloxidase (PPO) into active phenoloxidase (PO), the rate-limiting enzyme in melanin biosynthesis. In response to parasite P.berghei-mediated infection, binds to and mediates killing of ookinetes, as they egress from midgut epithelial cells into the basal labyrinth, by both lysis and melanization. During bacterial infection, binds to both Gram-positive and Gram-negative bacteria but only promotes phagocytosis of Gram-negative bacteria. Promotes the accumulation of SPCLIP1 onto the surface of P.berghei ookinetes and bacterium E.coli which leads to the melanization of the pathogen. Recruits CLIPA2 to bacteria surface. In response to bacterial infection, required for periostial hemocyte aggregation, but not for the aggregation of sessile hemocytes in non-periostial regions. During the late stage of fungus B.bassiana-mediated infection, required for the initiation of hyphae melanization by binding to the surface of hyphae and recruiting prophenoloxidase PPO to them. Plays a role in male fertility by binding to defective sperm cells and promoting their removal during spermatogenesis. Functionally, binds to and mediates killing of parasite P.bergei ookinetes by lysis and melanization. Its function is as follows. Binds covalently through a thioester bond to the pathogen surface resulting in pathogen clearance. In Anopheles gambiae (African malaria mosquito), this protein is Thioester-containing protein 1 allele R1.